The sequence spans 686 residues: Putative pentatricopeptide repeat-containing protein At3g49142 (686 aa).

PPR repeat units lie at residues 73–103 (NSSLGVKLMRAYASLKDVASARKVFDEIPER), 104–138 (NVIIINVMIRSYVNNGFYGEGVKVFGTMCGCNVRP), 139–173 (DHYTFPCVLKACSCSGTIVIGRKIHGSATKVGLSS), 174–204 (TLFVGNGLVSMYGKCGFLSEARLVLDEMSRR), 205–239 (DVVSWNSLVVGYAQNQRFDDALEVCREMESVKISH), 240–272 (DAGTMASLLPAVSNTTTENVMYVKDMFFKMGKK), 273–307 (SLVSWNVMIGVYMKNAMPVEAVELYSRMEADGFEP), 308–342 (DAVSITSVLPACGDTSALSLGKKIHGYIERKKLIP), 343–373 (NLLLENALIDMYAKCGCLEKARDVFENMKSR), 374–408 (DVVSWTAMISAYGFSGRGCDAVALFSKLQDSGLVP), 409–439 (DSIAFVTTLAACSHAGLLEEGRSCFKLMTDH), and 445–475 (RLEHLACMVDLLGRAGKVKEAYRFIQDMSME). Residues 480 to 555 (VWGALLGACR…NPGASNVEVN (76 aa)) form a type E motif region. The type E(+) motif stretch occupies residues 556-586 (RIIHTFLVGDRSHPQSDEIYRELDVLVKKMK). The tract at residues 587-686 (ELGYVPDSES…FGVCSCGDYW (100 aa)) is type DYW motif.

Belongs to the PPR family. PCMP-H subfamily.

The chain is Putative pentatricopeptide repeat-containing protein At3g49142 (PCMP-H77) from Arabidopsis thaliana (Mouse-ear cress).